The primary structure comprises 570 residues: Pleckstrin homology domain-containing family D member 1 (570 aa).

Positions 1–13 are enriched in basic and acidic residues; the sequence is MTTKTTPKELKAK. A disordered region spans residues 1 to 42; sequence MTTKTTPKELKAKKESKKKGSAPEPPKNGPPRTSPPNTIEKK. The span at 23 to 34 shows a compositional bias: pro residues; sequence PEPPKNGPPRTS. A PH domain is found at 83–192; it reads GVQNYGILMK…WLKALRSATK (110 aa). The stretch at 202–448 forms a coiled coil; sequence ETMIRELENR…TGAQMTELQE (247 aa). A compositionally biased stretch (basic residues) spans 542–551; that stretch reads SKRGIRSSFR. A disordered region spans residues 542-570; that stretch reads SKRGIRSSFRKKTDSITTQPREKEPLMQL. Over residues 561 to 570 the composition is skewed to basic and acidic residues; sequence PREKEPLMQL.

This sequence belongs to the PLEKHD1 family.

This chain is Pleckstrin homology domain-containing family D member 1, found in Caenorhabditis elegans.